The following is a 149-amino-acid chain: Large ribosomal subunit protein bL9 (149 aa).

Belongs to the bacterial ribosomal protein bL9 family.

Its function is as follows. Binds to the 23S rRNA. The sequence is that of Large ribosomal subunit protein bL9 from Vibrio cholerae serotype O1 (strain ATCC 39541 / Classical Ogawa 395 / O395).